The following is a 252-amino-acid chain: Triosephosphate isomerase (252 aa).

A substrate-binding site is contributed by 10–12 (NWK). Histidine 96 (electrophile) is an active-site residue. Glutamate 168 (proton acceptor) is an active-site residue. Substrate is bound by residues glycine 174, serine 214, and 235-236 (GG).

Belongs to the triosephosphate isomerase family. As to quaternary structure, homodimer.

Its subcellular location is the cytoplasm. It carries out the reaction D-glyceraldehyde 3-phosphate = dihydroxyacetone phosphate. The protein operates within carbohydrate biosynthesis; gluconeogenesis. It functions in the pathway carbohydrate degradation; glycolysis; D-glyceraldehyde 3-phosphate from glycerone phosphate: step 1/1. Functionally, involved in the gluconeogenesis. Catalyzes stereospecifically the conversion of dihydroxyacetone phosphate (DHAP) to D-glyceraldehyde-3-phosphate (G3P). The sequence is that of Triosephosphate isomerase from Streptococcus pyogenes serotype M1.